A 269-amino-acid chain; its full sequence is Ethylene-responsive transcription factor ERN1 (269 aa).

Residues Met-1–Lys-15 show a composition bias toward polar residues. Disordered regions lie at residues Met-1 to Val-36 and Asp-128 to Gly-157. The AP2/ERF DNA-binding region spans Lys-34–Ile-91. A compositionally biased stretch (low complexity) spans Asp-128–Ser-146.

It belongs to the AP2/ERF transcription factor family. ERF subfamily.

The protein localises to the nucleus. In terms of biological role, transcription factor involved in the symbiotic nodule signaling pathway in response to rhizobial stimulation. Functions as a transcriptional regulator required for root infection by symbiotic rhizobia, infection thread (IT) formation, and nodule development. May coordinate these processes. Functions downstream of the CCAMK-CYCLOPS complex. Probably not involved in arbuscular mycorrhizal (AM) symbiosis. The sequence is that of Ethylene-responsive transcription factor ERN1 from Lotus japonicus (Lotus corniculatus var. japonicus).